Here is a 156-residue protein sequence, read N- to C-terminus: Small ribosomal subunit protein uS7 (156 aa).

It belongs to the universal ribosomal protein uS7 family. Part of the 30S ribosomal subunit. Contacts proteins S9 and S11.

One of the primary rRNA binding proteins, it binds directly to 16S rRNA where it nucleates assembly of the head domain of the 30S subunit. Is located at the subunit interface close to the decoding center, probably blocks exit of the E-site tRNA. The chain is Small ribosomal subunit protein uS7 from Vibrio atlanticus (strain LGP32) (Vibrio splendidus (strain Mel32)).